The primary structure comprises 535 residues: Probable cytochrome P450 12b2, mitochondrial (535 aa).

Residue C479 coordinates heme.

The protein belongs to the cytochrome P450 family. The cofactor is heme.

The protein localises to the mitochondrion membrane. The chain is Probable cytochrome P450 12b2, mitochondrial (Cyp12b2) from Drosophila melanogaster (Fruit fly).